The sequence spans 145 residues: D-aminoacyl-tRNA deacylase (145 aa).

Residues 137-138 (GP) carry the Gly-cisPro motif, important for rejection of L-amino acids motif.

Belongs to the DTD family. As to quaternary structure, homodimer.

It localises to the cytoplasm. It catalyses the reaction glycyl-tRNA(Ala) + H2O = tRNA(Ala) + glycine + H(+). The catalysed reaction is a D-aminoacyl-tRNA + H2O = a tRNA + a D-alpha-amino acid + H(+). Its function is as follows. An aminoacyl-tRNA editing enzyme that deacylates mischarged D-aminoacyl-tRNAs. Also deacylates mischarged glycyl-tRNA(Ala), protecting cells against glycine mischarging by AlaRS. Acts via tRNA-based rather than protein-based catalysis; rejects L-amino acids rather than detecting D-amino acids in the active site. By recycling D-aminoacyl-tRNA to D-amino acids and free tRNA molecules, this enzyme counteracts the toxicity associated with the formation of D-aminoacyl-tRNA entities in vivo and helps enforce protein L-homochirality. The sequence is that of D-aminoacyl-tRNA deacylase from Shewanella sp. (strain ANA-3).